A 339-amino-acid chain; its full sequence is 3-isopropylmalate dehydrogenase (339 aa).

4 residues coordinate substrate: Arg-88, Arg-98, Arg-122, and Asp-212. The Mg(2+) site is built by Asp-212, Asp-236, and Asp-240. 272–284 (GSAPDIAGKGIAD) contacts NAD(+).

It belongs to the isocitrate and isopropylmalate dehydrogenases family. LeuB type 2 subfamily. In terms of assembly, homodimer. Mg(2+) serves as cofactor. Mn(2+) is required as a cofactor.

The protein resides in the cytoplasm. The enzyme catalyses (2R,3S)-3-isopropylmalate + NAD(+) = 4-methyl-2-oxopentanoate + CO2 + NADH. It functions in the pathway amino-acid biosynthesis; L-leucine biosynthesis; L-leucine from 3-methyl-2-oxobutanoate: step 3/4. Its function is as follows. Catalyzes the oxidation of 3-carboxy-2-hydroxy-4-methylpentanoate (3-isopropylmalate) to 3-carboxy-4-methyl-2-oxopentanoate. The product decarboxylates to 4-methyl-2 oxopentanoate. The protein is 3-isopropylmalate dehydrogenase of Corynebacterium aurimucosum (strain ATCC 700975 / DSM 44827 / CIP 107346 / CN-1) (Corynebacterium nigricans).